The sequence spans 394 residues: Phosphopentomutase (394 aa).

Positions 13, 286, 291, 327, 328, and 339 each coordinate Mn(2+).

It belongs to the phosphopentomutase family. The cofactor is Mn(2+).

It is found in the cytoplasm. It carries out the reaction 2-deoxy-alpha-D-ribose 1-phosphate = 2-deoxy-D-ribose 5-phosphate. The enzyme catalyses alpha-D-ribose 1-phosphate = D-ribose 5-phosphate. It functions in the pathway carbohydrate degradation; 2-deoxy-D-ribose 1-phosphate degradation; D-glyceraldehyde 3-phosphate and acetaldehyde from 2-deoxy-alpha-D-ribose 1-phosphate: step 1/2. In terms of biological role, isomerase that catalyzes the conversion of deoxy-ribose 1-phosphate (dRib-1-P) and ribose 1-phosphate (Rib-1-P) to deoxy-ribose 5-phosphate (dRib-5-P) and ribose 5-phosphate (Rib-5-P), respectively. This chain is Phosphopentomutase, found in Bacillus thuringiensis (strain Al Hakam).